A 41-amino-acid chain; its full sequence is Replication-associated protein (41 aa).

Its function is as follows. Involved in viral RNA replication. The protein is Replication-associated protein of Potato leafroll virus (strain Potato/Scotland/strain 1/1984) (PLrV).